The sequence spans 296 residues: Ribosomal RNA small subunit methyltransferase A (296 aa).

Asn30, Leu32, Gly57, Glu78, Asp103, and Asn128 together coordinate S-adenosyl-L-methionine.

This sequence belongs to the class I-like SAM-binding methyltransferase superfamily. rRNA adenine N(6)-methyltransferase family. RsmA subfamily.

The protein localises to the cytoplasm. It carries out the reaction adenosine(1518)/adenosine(1519) in 16S rRNA + 4 S-adenosyl-L-methionine = N(6)-dimethyladenosine(1518)/N(6)-dimethyladenosine(1519) in 16S rRNA + 4 S-adenosyl-L-homocysteine + 4 H(+). Functionally, specifically dimethylates two adjacent adenosines (A1518 and A1519) in the loop of a conserved hairpin near the 3'-end of 16S rRNA in the 30S particle. May play a critical role in biogenesis of 30S subunits. This Staphylococcus carnosus (strain TM300) protein is Ribosomal RNA small subunit methyltransferase A.